Here is a 396-residue protein sequence, read N- to C-terminus: Elongation factor Tu 2 (396 aa).

Positions 10–206 (KPHVNVGTIG…TLDTYIPEPE (197 aa)) constitute a tr-type G domain. Residues 19–26 (GHVDHGKT) are G1. A GTP-binding site is contributed by 19-26 (GHVDHGKT). A Mg(2+)-binding site is contributed by threonine 26. Residues 60-64 (GITIN) are G2. Positions 81–84 (DCPG) are G3. Residues 81 to 85 (DCPGH) and 136 to 139 (NKCD) each bind GTP. The tract at residues 136–139 (NKCD) is G4. Positions 174–176 (SAL) are G5.

The protein belongs to the TRAFAC class translation factor GTPase superfamily. Classic translation factor GTPase family. EF-Tu/EF-1A subfamily. Monomer.

The protein localises to the cytoplasm. The enzyme catalyses GTP + H2O = GDP + phosphate + H(+). GTP hydrolase that promotes the GTP-dependent binding of aminoacyl-tRNA to the A-site of ribosomes during protein biosynthesis. The chain is Elongation factor Tu 2 from Psychrobacter sp. (strain PRwf-1).